Here is a 502-residue protein sequence, read N- to C-terminus: Protein IWS1 homolog 1 (502 aa).

The span at 1-12 shows a compositional bias: basic and acidic residues; sequence MGFEDDPYRDVD. Disordered regions lie at residues 1-61 and 87-208; these read MGFE…DNDK and DEDV…DEDE. 3 stretches are compositionally biased toward acidic residues: residues 13-22, 34-49, and 87-97; these read GEPIVDFDDF, QDFD…DWDG, and DEDVDDAEFDE. Composition is skewed to basic and acidic residues over residues 138 to 151 and 181 to 194; these read NRGE…DEMW and PSER…DRSP. The residue at position 185 (tyrosine 185) is a Phosphotyrosine. Positions 287–370 constitute a TFIIS N-terminal domain; sequence TLLKNWLEPL…DKWSRPIFNK (84 aa). The disordered stretch occupies residues 385-434; the sequence is VPYRRPPVKKPSNKATMESRDGDFDLEIRERKTGLTSGQSSRGDRQMTMR. Over residues 401–417 the composition is skewed to basic and acidic residues; that stretch reads MESRDGDFDLEIRERKT.

The protein belongs to the IWS1 family. As to quaternary structure, interacts with BZR2/BES1 and SPT6 (via N-terminus). Interacts with ASHH2/SDG8.

The protein resides in the nucleus. Its function is as follows. Transcription factor involved in RNA polymerase II (RNAPII) transcription regulation. Involved in transcription elongation. May function at post-recruitment and elongation steps of transcription. May be recruited by BZR2/BES1 to target genes and promote their expression during transcription elongation process. Required for brassinosteroid (BR)-induced gene expression. Required the for regulation of numerous nitrogen-responsive genes in roots. Acts in roots to repress NRT2.1 transcription in response to high nitrogen supply. This repression is associated with an IWS1-dependent increase of trimethylation on 'Lys-27' H3K27me3 at the NRT2.1 locus. This is Protein IWS1 homolog 1 from Arabidopsis thaliana (Mouse-ear cress).